The primary structure comprises 387 residues: Succinate--CoA ligase [ADP-forming] subunit beta (387 aa).

Positions 9-236 (KELFAKHNVP…RAATDPLELK (228 aa)) constitute an ATP-grasp domain. ATP-binding positions include K45, 52–54 (GRG), S94, and E99. Residues N191 and D205 each contribute to the Mg(2+) site. Substrate is bound by residues N256 and 318 to 320 (GIT).

The protein belongs to the succinate/malate CoA ligase beta subunit family. As to quaternary structure, heterotetramer of two alpha and two beta subunits. It depends on Mg(2+) as a cofactor.

The enzyme catalyses succinate + ATP + CoA = succinyl-CoA + ADP + phosphate. The catalysed reaction is GTP + succinate + CoA = succinyl-CoA + GDP + phosphate. It participates in carbohydrate metabolism; tricarboxylic acid cycle; succinate from succinyl-CoA (ligase route): step 1/1. Functionally, succinyl-CoA synthetase functions in the citric acid cycle (TCA), coupling the hydrolysis of succinyl-CoA to the synthesis of either ATP or GTP and thus represents the only step of substrate-level phosphorylation in the TCA. The beta subunit provides nucleotide specificity of the enzyme and binds the substrate succinate, while the binding sites for coenzyme A and phosphate are found in the alpha subunit. The protein is Succinate--CoA ligase [ADP-forming] subunit beta of Mycobacterium marinum (strain ATCC BAA-535 / M).